Consider the following 99-residue polypeptide: DNA-binding protein Fis (99 aa).

A DNA-binding region (H-T-H motif) is located at residues 75–94 (QTRAALMLGVNRGTLRKKLK).

It belongs to the transcriptional regulatory Fis family. In terms of assembly, homodimer.

In terms of biological role, activates ribosomal RNA transcription. Plays a direct role in upstream activation of rRNA promoters. The protein is DNA-binding protein Fis of Actinobacillus succinogenes (strain ATCC 55618 / DSM 22257 / CCUG 43843 / 130Z).